A 133-amino-acid polypeptide reads, in one-letter code: ATP synthase epsilon chain (133 aa).

It belongs to the ATPase epsilon chain family. As to quaternary structure, F-type ATPases have 2 components, CF(1) - the catalytic core - and CF(0) - the membrane proton channel. CF(1) has five subunits: alpha(3), beta(3), gamma(1), delta(1), epsilon(1). CF(0) has three main subunits: a, b and c.

It localises to the cell membrane. Its function is as follows. Produces ATP from ADP in the presence of a proton gradient across the membrane. The polypeptide is ATP synthase epsilon chain (Geobacillus thermodenitrificans (strain NG80-2)).